Consider the following 715-residue polypeptide: DNA ligase (715 aa).

NAD(+) contacts are provided by residues 47 to 51, 96 to 97, and Glu-129; these read DADYD and SL. Lys-131 (N6-AMP-lysine intermediate) is an active-site residue. 4 residues coordinate NAD(+): Arg-152, Glu-189, Lys-306, and Lys-330. The Zn(2+) site is built by Cys-435, Cys-438, Cys-453, and Cys-459. In terms of domain architecture, BRCT spans 637–715; the sequence is KRDSAVAGKT…EDEWLALIQG (79 aa).

Belongs to the NAD-dependent DNA ligase family. LigA subfamily. Requires Mg(2+) as cofactor. Mn(2+) serves as cofactor.

The catalysed reaction is NAD(+) + (deoxyribonucleotide)n-3'-hydroxyl + 5'-phospho-(deoxyribonucleotide)m = (deoxyribonucleotide)n+m + AMP + beta-nicotinamide D-nucleotide.. Functionally, DNA ligase that catalyzes the formation of phosphodiester linkages between 5'-phosphoryl and 3'-hydroxyl groups in double-stranded DNA using NAD as a coenzyme and as the energy source for the reaction. It is essential for DNA replication and repair of damaged DNA. In Rhodopseudomonas palustris (strain BisA53), this protein is DNA ligase.